We begin with the raw amino-acid sequence, 219 residues long: MQNKLIVKKLGRQDYEPVWKAMHKFTDERTDEDVDQIWLVEHNPVFTQGQAGKAEHVLNAGDIPVIQSDRGGQVTYHGPGQLVAYFLINIRRKKFGVRDLVTHIENLVINTLKAYNIDSTARPDAPGVYVDGKKICSLGLRIRRGCSFHGLALNVDMDLSPFQRINPCGYQGMEMAQVSQLGGPSELENVEQQLIQELVELLGYDQVDIQATSNITAEA.

One can recognise a BPL/LPL catalytic domain in the interval 31-206; that stretch reads DEDVDQIWLV…ELVELLGYDQ (176 aa). Residues 70–77, 137–139, and 150–152 contribute to the substrate site; these read RGGQVTYH, SLG, and GLA. C168 acts as the Acyl-thioester intermediate in catalysis.

This sequence belongs to the LipB family.

It is found in the cytoplasm. The catalysed reaction is octanoyl-[ACP] + L-lysyl-[protein] = N(6)-octanoyl-L-lysyl-[protein] + holo-[ACP] + H(+). Its pathway is protein modification; protein lipoylation via endogenous pathway; protein N(6)-(lipoyl)lysine from octanoyl-[acyl-carrier-protein]: step 1/2. In terms of biological role, catalyzes the transfer of endogenously produced octanoic acid from octanoyl-acyl-carrier-protein onto the lipoyl domains of lipoate-dependent enzymes. Lipoyl-ACP can also act as a substrate although octanoyl-ACP is likely to be the physiological substrate. The polypeptide is Octanoyltransferase (Vibrio atlanticus (strain LGP32) (Vibrio splendidus (strain Mel32))).